The following is a 133-amino-acid chain: MKDNIELAIFTPEKNIKIGEIKEVITEGLDGDLAILPNHVNMITYLKPTITKYIDLNGNKNNIFTSSGVLKVEDNKVYIICDASEKPEDIDIKRAENAKKRAEERLRNKKEIDVKRAELALFRSIARIKIKEL.

It belongs to the ATPase epsilon chain family. F-type ATPases have 2 components, CF(1) - the catalytic core - and CF(0) - the membrane proton channel. CF(1) has five subunits: alpha(3), beta(3), gamma(1), delta(1), epsilon(1). CF(0) has three main subunits: a, b and c.

The protein localises to the cell membrane. In terms of biological role, produces ATP from ADP in the presence of a proton gradient across the membrane. The chain is ATP synthase epsilon chain from Clostridium botulinum (strain Langeland / NCTC 10281 / Type F).